The primary structure comprises 216 residues: Peroxiredoxin (216 aa).

Residues 2–158 enclose the Thioredoxin domain; it reads VVIGEKFPEV…ILRLVKALKI (157 aa). C46 (cysteine sulfenic acid (-SOH) intermediate) is an active-site residue. R121 contributes to the substrate binding site. A disulfide bridge links C205 with C211.

It belongs to the peroxiredoxin family. Prx6 subfamily. As to quaternary structure, homodecamer. Pentamer of dimers that assemble into a ring structure.

It is found in the cytoplasm. The catalysed reaction is a hydroperoxide + [thioredoxin]-dithiol = an alcohol + [thioredoxin]-disulfide + H2O. Thiol-specific peroxidase that catalyzes the reduction of hydrogen peroxide and organic hydroperoxides to water and alcohols, respectively. Plays a role in cell protection against oxidative stress by detoxifying peroxides. The protein is Peroxiredoxin of Pyrococcus abyssi (strain GE5 / Orsay).